Here is a 293-residue protein sequence, read N- to C-terminus: Cyclohexadienyl dehydrogenase (293 aa).

Residues 5 to 293 enclose the Prephenate/arogenate dehydrogenase domain; that stretch reads KHIAIIGLGL…ALKTDHDIRP (289 aa). 6–30 serves as a coordination point for NAD(+); that stretch reads HIAIIGLGLIGSSAARATKAYCPDV.

Belongs to the prephenate/arogenate dehydrogenase family. In terms of assembly, homodimer.

It catalyses the reaction L-arogenate + NAD(+) = L-tyrosine + CO2 + NADH. The enzyme catalyses prephenate + NAD(+) = 3-(4-hydroxyphenyl)pyruvate + CO2 + NADH. Its pathway is amino-acid biosynthesis; L-tyrosine biosynthesis; (4-hydroxyphenyl)pyruvate from prephenate (NAD(+) route): step 1/1. It functions in the pathway amino-acid biosynthesis; L-tyrosine biosynthesis; L-tyrosine from L-arogenate (NAD(+) route): step 1/1. Its activity is regulated as follows. Insensitive to feedback inhibition by L-tyrosine. Can function as either prephenate dehydrogenase or as arogenate dehydrogenase in the biosynthesis of L-tyrosine. Catalyzes two analogous reactions: converts prephenate to 4-hydroxyphenylpyruvate and transforms L-arogenate to L-tyrosine. Is not able to utilize NADP(+) instead of NAD(+) as cosubstrate. The sequence is that of Cyclohexadienyl dehydrogenase from Zymomonas mobilis subsp. mobilis (strain ATCC 31821 / ZM4 / CP4).